A 1016-amino-acid chain; its full sequence is DENN domain-containing protein 1A (1016 aa).

The uDENN domain maps to 13-145 (FEVYVEVAYP…HRLPIPDPGV (133 aa)). Residues 162 to 298 (ELPSIPENRN…VISSLKNRLK (137 aa)) form the cDENN domain. Residues 300–378 (VSTTTGDGVA…DGRLDLLNSG (79 aa)) enclose the dDENN domain. The FXDXF motif signature appears at 381 to 385 (FSDVF). A disordered region spans residues 453-565 (DITENGCVSS…GPTPAPPDRA (113 aa)). A Phosphoserine modification is found at serine 473. Residues 479 to 489 (QDPRLREDRRP) show a composition bias toward basic and acidic residues. Basic residues predominate over residues 500–509 (PRPHVVRRPK). Threonine 519 bears the Phosphothreonine mark. Serine 520, serine 522, serine 523, serine 536, serine 538, and serine 546 each carry phosphoserine. The Clathrin box motif lies at 569-578 (DLLEDVFSSL). Serine 592 bears the Phosphoserine mark. The disordered stretch occupies residues 681–737 (LSPSIKEETPIPTPGSITIPRPQGRKTPELGIVPPPPTARPAKLQAAGGPLGDFSSE). Serine 750 is modified (phosphoserine). Omega-N-methylarginine is present on arginine 760. Disordered stretches follow at residues 763–783 (PQGPTELLQPPSPAPGAAGTG) and 935–1016 (SARA…ETFE). The segment covering 954–970 (LLPPRPPQSLQPTPQPS) has biased composition (pro residues). Composition is skewed to basic and acidic residues over residues 977 to 988 (DPFEDLLRKTKQ) and 1007 to 1016 (QLRRQWETFE).

In terms of assembly, interacts with RAB35. Interacts with clathrin and with the adapter protein complex 2, AP-2. Interacts with ITSN1 and SH3GL2. Interacts (when phosphorylated) with YWHAE. In terms of processing, phosphorylated on serine and/or threonine in an Akt-dependent manner. Phosphorylation probably regulates the guanine nucleotide exchange factor (GEF) activity, possibly by disrupting an intramolecular interaction between the DENN domain and the C-terminus of the protein, thereby relieving the autoinhibition.

Its subcellular location is the cytoplasmic vesicle. It localises to the clathrin-coated vesicle membrane. The protein localises to the presynaptic cell membrane. The guanine nucleotide exchange factor (GEF) activity is autoinhibited. Autoinhibition may be the result of intramolecular interaction between the DENN domain and the C-terminus, which is disrupted upon phosphorylation. Activation is regulated by Akt activation. In terms of biological role, guanine nucleotide exchange factor (GEF) regulating clathrin-mediated endocytosis through RAB35 activation. Promotes the exchange of GDP to GTP, converting inactive GDP-bound RAB35 into its active GTP-bound form. Regulates clathrin-mediated endocytosis of synaptic vesicles and mediates exit from early endosomes. Binds phosphatidylinositol-phosphates (PtdInsPs), with some preference for PtdIns(3)P. The chain is DENN domain-containing protein 1A (Dennd1a) from Mus musculus (Mouse).